The following is a 302-amino-acid chain: MDGGGGMLGAVVCLLLVFAIFPLLLWRRRSDAAHRLPPQPLQDERVLRGGPAPGPAARRMRRRPLSTSADASTSRDRDVDDADSDLEEEIQDVPRGSKKKEKKRQDREAQRQAEEAARDSRRTKQDRYAEMRRKKDEEREAQERLMEEEARARKAKEEEAAALEFEKWKGAFSVDAEGTTESDTQDDGQGLLHNFVEYIKNQKCVPLEDLAAEFRMRTQDCINRIITLEGMDRLSGVMDDRGKFIYISTEEMKAVADYIRKQGRVSISHLASNSNQFIDLEPKPQYNEESNLDENAAAGTEL.

Residues 1–5 (MDGGG) lie on the Lumenal side of the membrane. Residues 6 to 26 (GMLGAVVCLLLVFAIFPLLLW) form a helical membrane-spanning segment. Residues 27 to 302 (RRRSDAAHRL…DENAAAGTEL (276 aa)) are Cytoplasmic-facing. 2 disordered regions span residues 36–151 (LPPQ…EEAR) and 279–302 (DLEPKPQYNEESNLDENAAAGTEL). Positions 79 to 91 (VDDADSDLEEEIQ) are enriched in acidic residues. Over residues 103 to 151 (KRQDREAQRQAEEAARDSRRTKQDRYAEMRRKKDEEREAQERLMEEEAR) the composition is skewed to basic and acidic residues.

This sequence belongs to the DDRGK1 family.

The protein localises to the endoplasmic reticulum membrane. Functionally, substrate adapter for ufmylation, the covalent attachment of the ubiquitin-like modifier UFM1 to substrate proteins. The polypeptide is DDRGK domain-containing protein 1 (Oryza sativa subsp. japonica (Rice)).